Consider the following 276-residue polypeptide: Protein MGF 360-15R (276 aa).

The protein belongs to the asfivirus MGF 360 family.

Functionally, plays a role in virus cell tropism, and may be required for efficient virus replication in macrophages. In African swine fever virus (isolate Tick/South Africa/Pretoriuskop Pr4/1996) (ASFV), this protein is Protein MGF 360-15R.